Here is a 126-residue protein sequence, read N- to C-terminus: UPF0102 protein Mlg_2205 (126 aa).

It belongs to the UPF0102 family.

The chain is UPF0102 protein Mlg_2205 from Alkalilimnicola ehrlichii (strain ATCC BAA-1101 / DSM 17681 / MLHE-1).